A 421-amino-acid chain; its full sequence is Gamma-glutamyl phosphate reductase (421 aa).

Belongs to the gamma-glutamyl phosphate reductase family.

The protein resides in the cytoplasm. The enzyme catalyses L-glutamate 5-semialdehyde + phosphate + NADP(+) = L-glutamyl 5-phosphate + NADPH + H(+). It functions in the pathway amino-acid biosynthesis; L-proline biosynthesis; L-glutamate 5-semialdehyde from L-glutamate: step 2/2. Catalyzes the NADPH-dependent reduction of L-glutamate 5-phosphate into L-glutamate 5-semialdehyde and phosphate. The product spontaneously undergoes cyclization to form 1-pyrroline-5-carboxylate. This is Gamma-glutamyl phosphate reductase from Acinetobacter baumannii (strain SDF).